The primary structure comprises 722 residues: MLRPEQMSKVSVAGSTHVLTPVIEAVHDAELVHLSDYDGGIDGFDNGDPMTGADEAAEKLVTVRSLKSLLDVSEGDAGPTRIVTDDALDTELESIRVEATDLDDRRSELTDDLRAVIERIDAAEPFADLGIDLDLLSGYDSLQVAVGTGDQSAIDAALAASDRISAFETFTGQDTIGVFAYPAADDDAALDDALVGVPFTRLDVPDADGSPEQYVSELRERRDTIQAEIEDVDDELAAFRDEHAGFLLAAEERLAIDVQKSEAPLQFASTSHAFVAEGWLPTSEYDAFTDAIESAVGDHVLVEELERADYKPTGHDQHVPADDGADAATDGGTTASFDETDSPPVIQDNPGPVSSFESLTEVINRPQYTEIDPTVVLFLTFPAFYGFMIGDLGYGVLYALLGFWLSRSFDSEMISKLGGVAMWAGGFTALFGVLYGEVFGLHLVTEYLWHGALGLADAPLKKGLHVSAFAELWLAASLVFGIAHLAIGYVFGFVNESRSHGLKDAALESGGQLLLMAGVGVWLFSTHMQSGGGPRPELLYSVVALPPIVGKAGLAAAVVGLVLVTLGEGAAGFLESPTYALVNTVSYTRIAAVLLAKAGMAYVVNLLVFGAYETHLEHPETIDYMFGLFSTTIEHETHFMLFSGEAHGEVLFPGLMHMGAAGILIGVLVLLVGHALVLALGVTSAGLQALRLEYVEFFNKFYEGGGEKYNPFGYTRNYTTED.

Over residues 309-321 (DYKPTGHDQHVPA) the composition is skewed to basic and acidic residues. Residues 309–352 (DYKPTGHDQHVPADDGADAATDGGTTASFDETDSPPVIQDNPGP) are disordered. The span at 326–335 (DAATDGGTTA) shows a compositional bias: low complexity. 8 helical membrane-spanning segments follow: residues 384 to 404 (FYGFMIGDLGYGVLYALLGFW), 419 to 439 (GVAMWAGGFTALFGVLYGEVF), 474 to 494 (LAASLVFGIAHLAIGYVFGFV), 505 to 525 (AALESGGQLLLMAGVGVWLFS), 554 to 574 (LAAAVVGLVLVTLGEGAAGFL), 590 to 610 (IAAVLLAKAGMAYVVNLLVFG), 639 to 659 (FMLFSGEAHGEVLFPGLMHMG), and 662 to 682 (GILIGVLVLLVGHALVLALGV).

This sequence belongs to the V-ATPase 116 kDa subunit family. In terms of assembly, has multiple subunits with at least A(3), B(3), C, D, E, F, H, I and proteolipid K(x).

It is found in the cell membrane. In terms of biological role, component of the A-type ATP synthase that produces ATP from ADP in the presence of a proton gradient across the membrane. This Halobacterium salinarum (strain ATCC 700922 / JCM 11081 / NRC-1) (Halobacterium halobium) protein is A-type ATP synthase subunit I.